Here is a 677-residue protein sequence, read N- to C-terminus: DNA-directed RNA polymerase subunit beta' (677 aa).

Residues C69, C71, C87, and C90 each coordinate Zn(2+). Mg(2+) contacts are provided by D489, D491, and D493.

It belongs to the RNA polymerase beta' chain family. RpoC1 subfamily. In terms of assembly, in plastids the minimal PEP RNA polymerase catalytic core is composed of four subunits: alpha, beta, beta', and beta''. When a (nuclear-encoded) sigma factor is associated with the core the holoenzyme is formed, which can initiate transcription. It depends on Mg(2+) as a cofactor. Requires Zn(2+) as cofactor.

Its subcellular location is the plastid. The protein localises to the chloroplast. The enzyme catalyses RNA(n) + a ribonucleoside 5'-triphosphate = RNA(n+1) + diphosphate. Functionally, DNA-dependent RNA polymerase catalyzes the transcription of DNA into RNA using the four ribonucleoside triphosphates as substrates. The protein is DNA-directed RNA polymerase subunit beta' of Daucus carota (Wild carrot).